We begin with the raw amino-acid sequence, 239 residues long: U2 small nuclear ribonucleoprotein A' (239 aa).

LRR repeat units follow at residues 19–40 (KETE…GVLR), 42–63 (VHDA…PRMK), 64–85 (RLQT…IGKV), and 88–109 (NLKT…DPLA). An LRRCT domain is found at 122-160 (NPVAQKQYYRLYLIWRIPSLHILDFERVRRNERLRAEEV).

Belongs to the U2 small nuclear ribonucleoprotein A family. As to quaternary structure, belongs to the 40S cdc5-associated complex (or cwf complex), a spliceosome sub-complex reminiscent of a late-stage spliceosome composed of the U2, U5 and U6 snRNAs and at least brr2, cdc5, cwf2/prp3, cwf3/syf1, cwf4/syf3, cwf5/ecm2, spp42/cwf6, cwf7/spf27, cwf8, cwf9, cwf10, cwf11, cwf12, prp45/cwf13, cwf14, cwf15, cwf16, cwf17, cwf18, cwf19, cwf20, cwf21, cwf22, cwf23, cwf24, cwf25, cwf26, cyp7/cwf27, cwf28, cwf29/ist3, lea1, msl1, prp5/cwf1, prp10, prp12/sap130, prp17, prp22, sap61, sap62, sap114, sap145, slu7, smb1, smd1, smd3, smf1, smg1 and syf2.

The protein localises to the nucleus. Its function is as follows. Involved in pre-mRNA splicing. This protein is associated with sn-RNP U2. It helps the A' protein to bind stem loop IV of U2 snRNA. This is U2 small nuclear ribonucleoprotein A' (lea1) from Schizosaccharomyces pombe (strain 972 / ATCC 24843) (Fission yeast).